The sequence spans 93 residues: Small ribosomal subunit protein uS19 (93 aa).

It belongs to the universal ribosomal protein uS19 family.

Functionally, protein S19 forms a complex with S13 that binds strongly to the 16S ribosomal RNA. The polypeptide is Small ribosomal subunit protein uS19 (Kocuria rhizophila (strain ATCC 9341 / DSM 348 / NBRC 103217 / DC2201)).